Reading from the N-terminus, the 195-residue chain is NADH dehydrogenase [ubiquinone] iron-sulfur protein 3 (195 aa).

This sequence belongs to the complex I 30 kDa subunit family. As to quaternary structure, complex I is composed of about 45 different subunits. This is a component of the iron-sulfur (IP) fragment of the enzyme.

It is found in the mitochondrion inner membrane. The enzyme catalyses a ubiquinone + NADH + 5 H(+)(in) = a ubiquinol + NAD(+) + 4 H(+)(out). Core subunit of the mitochondrial membrane respiratory chain NADH dehydrogenase (Complex I) that is believed to belong to the minimal assembly required for catalysis. Complex I functions in the transfer of electrons from NADH to the respiratory chain. The immediate electron acceptor for the enzyme is believed to be ubiquinone. This Marchantia polymorpha (Common liverwort) protein is NADH dehydrogenase [ubiquinone] iron-sulfur protein 3 (NAD9).